The sequence spans 500 residues: MNYFPWLTTVVVFPIFAGLLLFFFPHRGNKVMRWYTICICVLELLLTTYAFCYHFELDDPLIQLMEDYKWIPFLDFYWRLGIDGLSIGPILLTGFITTLATLAAWPVTRDSRLFYFLMLAMYSGQIGSFSARDLLLFFIMWEFELIPVYLLLSMWGGKKRLYSATKFILYTAGGSIFLLMGVLGIGLYGSNEPTLNFETSANQSYPIALEILFYIGFLIAFAVKSPIIPLHTWLPDTHGEAHYSTCMLLAGILLKMGAYGLVRINMELLPHAHSIFSPWLIIVGIIQIIYAASTSSGQRNLKKRIAYSSVSHMGFIIIGIGSISDTGLNGAILQIISHGFIGAALFFLAGTSYDRIRLVYLDEMGGLAIPIPKIFTTFSILSMASLALPGMSGFVAELIVFFGIITSQKYLLMTKMVITLVMAIGIILTPIYLLSMLRQMFYGYKLFNAKNSYFFDSGPRELFVAISILIPVIGIGIYPDFVFSLSVDKVEAILSNYFAR.

The next 15 membrane-spanning stretches (helical) occupy residues 4-24 (FPWL…LFFF), 37-57 (ICIC…HFEL), 87-107 (IGPI…AWPV), 113-130 (LFYF…GSFS), 134-154 (LLLF…LLSM), 167-187 (FILY…GIGL), 207-227 (IALE…KSPI), 242-262 (HYST…YGLV), 272-292 (AHSI…IYAA), 305-325 (IAYS…SISD), 330-350 (GAIL…FLAG), 364-384 (MGGL…LSMA), 386-406 (LALP…GIIT), 417-437 (VITL…LSML), and 463-483 (FVAI…DFVF).

This sequence belongs to the complex I subunit 4 family.

The protein resides in the plastid. It localises to the chloroplast thylakoid membrane. The catalysed reaction is a plastoquinone + NADH + (n+1) H(+)(in) = a plastoquinol + NAD(+) + n H(+)(out). The enzyme catalyses a plastoquinone + NADPH + (n+1) H(+)(in) = a plastoquinol + NADP(+) + n H(+)(out). This Cucumis sativus (Cucumber) protein is NAD(P)H-quinone oxidoreductase chain 4, chloroplastic.